The primary structure comprises 377 residues: Oleosin-B4 (377 aa).

Residues 1-37 (MRNEIQNETAQTDQTQGSMFSFFNLFPFLLPMFEVIK) form a polar region. Helical transmembrane passes span 16–36 (QGSM…FEVI), 38–58 (MVVA…TLSG), and 69–89 (LFII…VLAA). The segment at 38-133 (MVVASVASVV…IIPESIKPSN (96 aa)) is hydrophobic. 3 repeat units span residues 115-124 (IPESIKPSNI), 125-134 (IPESIKPSNI), and 135-144 (IPEGIKPSNI). The 3 X 10 AA tandem repeats of I-P-E-[SG]-I-K-P-S-N-[IV] stretch occupies residues 115 to 144 (IPESIKPSNIIPESIKPSNIIPEGIKPSNI). Residues 158-377 (KIKAKKEEKS…SSHGSGGKHI (220 aa)) are disordered. Composition is skewed to basic and acidic residues over residues 162-185 (KKEE…KGED) and 195-231 (DEDK…EGKH). One copy of the 2-1 repeat lies at 196–202 (EDKHGSG). The stretch at 196–202 (EDKHGSG) is one 2.1 repeat. The 3 X 6 AA tandem repeats of E-[SD]-[KT]-H-G-[KS]-G stretch occupies residues 196–222 (EDKHGSGAKHGKGESKHGKGESTHGKG). Residues 204–208 (KHGKG) form a 2-2; truncated repeat. 7 repeat units span residues 209–215 (ESKHGKG), 216–222 (ESTHGKG), 230–247 (KHGS…GSGG), 260–277 (KHES…GSEG), 278–295 (KHGS…GSGG), 296–313 (KHES…GSGG), and 355–359 (SSDGS). The tract at residues 230 to 313 (KHGSGGSSMG…MGGGKHGSGG (84 aa)) is 4 X 18 AA tandem repeats of K-H-E-S-G-G-[SA]-[PSA]-M-G-G-G-K-H-G-S-[GE]-G. A compositionally biased stretch (gly residues) spans 232–244 (GSGGSSMGGGKHG). Residues 247–263 (GKHETGGKHGSGGKHES) show a composition bias toward basic and acidic residues. 2 stretches are compositionally biased toward gly residues: residues 280–292 (GSGG…GKHG) and 302–314 (SAMG…SGGK). Residues 350–369 (SSTSESSDGSSDGSSSDGSS) are compositionally biased toward low complexity. Residues 355–368 (SSDGSSDGSSSDGS) form a 3 X 5 AA tandem repeats of S-S-D-G-S region. Residues 360 to 363 (SDGS) form a 4-2; truncated repeat. The stretch at 364–368 (SSDGS) is one 4-3 repeat.

Belongs to the oleosin family. In terms of tissue distribution, the full-length protein is found in the tapetal lipid bodies of immature anthers, the proteolytically cleaved C-terminal product is found on the coats of pollen grains. No expression is detected in other flower organs, siliques or seedlings.

The protein resides in the lipid droplet. It localises to the membrane. In terms of biological role, many of the major pollen coat proteins are derived from endoproteolytic cleavage of oleosin-like proteins. The polypeptide is Oleosin-B4 (Brassica napus (Rape)).